Here is a 1353-residue protein sequence, read N- to C-terminus: DNA-directed RNA polymerase subunit beta' (1353 aa).

The segment at methionine 1–lysine 117 is unknown. The interval leucine 118–asparagine 1353 is DNA-directed RNA polymerase subunit beta'. 4 residues coordinate Zn(2+): cysteine 189, cysteine 191, cysteine 203, and cysteine 206. Mg(2+) is bound by residues aspartate 578, aspartate 580, and aspartate 582.

This sequence belongs to the RNA polymerase beta' chain family. In terms of assembly, the RNAP catalytic core consists of 2 alpha, 1 beta, 1 beta' and 1 omega subunit. When a sigma factor is associated with the core the holoenzyme is formed, which can initiate transcription. Mg(2+) serves as cofactor. Zn(2+) is required as a cofactor.

It catalyses the reaction RNA(n) + a ribonucleoside 5'-triphosphate = RNA(n+1) + diphosphate. DNA-dependent RNA polymerase catalyzes the transcription of DNA into RNA using the four ribonucleoside triphosphates as substrates. This chain is DNA-directed RNA polymerase subunit beta', found in Aster yellows witches'-broom phytoplasma (strain AYWB).